The following is a 456-amino-acid chain: Argininosuccinate lyase (456 aa).

This sequence belongs to the lyase 1 family. Argininosuccinate lyase subfamily.

It localises to the cytoplasm. The enzyme catalyses 2-(N(omega)-L-arginino)succinate = fumarate + L-arginine. The protein operates within amino-acid biosynthesis; L-arginine biosynthesis; L-arginine from L-ornithine and carbamoyl phosphate: step 3/3. The sequence is that of Argininosuccinate lyase from Listeria monocytogenes serotype 4b (strain F2365).